The primary structure comprises 461 residues: Nucleobindin-1 (461 aa).

Positions 1 to 26 are cleaved as a signal peptide; that stretch reads MPPSGPRGTLLLLPLLLLLLLRAVLA. Residues 42-51 are O-glycosylated at one site; that stretch reads TESPDTGLYY. Residue Ser-86 is modified to Phosphoserine; by FAM20C. Thr-148 is subject to Phosphothreonine; by FAM20C. Residues 150-218 adopt a coiled-coil conformation; that stretch reads EARDLELLIQ…QQRRHREHPK (69 aa). Residues 172 to 218 mediate DNA binding; sequence HHEEFKRYEMLKEHERRRYLESLGEEQRKEAERKLEEQQRRHREHPK. A compositionally biased stretch (basic and acidic residues) spans 193–210; it reads SLGEEQRKEAERKLEEQQ. Positions 193–221 are disordered; sequence SLGEEQRKEAERKLEEQQRRHREHPKVNV. Positions 228-321 are binds to GNAI2 and GNAI3; that stretch reads LKEVWEELDG…VTLEEFLAST (94 aa). EF-hand domains follow at residues 240 to 275 and 292 to 327; these read PNRF…ELEK and ERLR…KEFG. Residues Asp-253, Asn-255, Asp-257, Glu-264, Asp-305, Asn-307, Asp-309, and Glu-316 each contribute to the Ca(2+) site. A GBA motif is present at residues 303–333; that stretch reads NVDTNQDRLVTLEEFLASTQRKEFGDTGEGW. Residues 341–407 are a coiled coil; it reads AYTEEELRRF…QRKQQQQQQQ (67 aa). The interval 368-461 is disordered; the sequence is LSQETEALGR…LPEVEVPQHL (94 aa). Ser-369 is modified (phosphoserine; by FAM20C). Over residues 437–461 the composition is skewed to basic and acidic residues; it reads DQKEVDTSEKKLLERLPEVEVPQHL.

This sequence belongs to the nucleobindin family. As to quaternary structure, interacts (via GBA motif) with guanine nucleotide-binding protein G(i) alpha subunits GNAI1, GNAI2 and GNAI3 with higher affinity for GNAI1 and GNAI3 than for GNAI2. Preferentially interacts with inactive rather than active GNAI3. Interaction with GNAI3 is inhibited when NUCB1 binds calcium, probably due to a conformational change which renders the GBA motif inaccessible. Post-translationally, O-glycosylated. As to expression, expressed both in fetal and adult heart, lung, liver, kidney and brain, and in adult skeletal muscle, placenta and pancreas.

The protein localises to the golgi apparatus. The protein resides in the cis-Golgi network membrane. It localises to the cytoplasm. Its subcellular location is the secreted. Major calcium-binding protein of the Golgi which may have a role in calcium homeostasis. Acts as a non-receptor guanine nucleotide exchange factor which binds to and activates alpha subunits of guanine nucleotide-binding proteins (G proteins). The polypeptide is Nucleobindin-1 (NUCB1) (Homo sapiens (Human)).